Here is a 159-residue protein sequence, read N- to C-terminus: MAFNLFTTFTERLRLVSWRSVFEDTRSLRRFLIRIALVATGLVSKESAIVCHVLAGKVLRMYKTSRDPCLRIIVSLPLLSIYFRPDSIAKSNRKQRPWKEKIFHPDSRKMSCHCEPLPYQTRFDRQAPLQEYSIYPKSRKRLELDPQQNSTVVVQHDKF.

The protein resides in the mitochondrion. This is an uncharacterized protein from Arabidopsis thaliana (Mouse-ear cress).